A 396-amino-acid chain; its full sequence is MAKAKFERTKPHVNIGTIGHVDHGKTTLTAAITKVLAERGQAEFRGFDQIDNAPEERERGITIATSHVEYETEKRHYAHVDCPGHADYVKNMITGAAQMDGAILVVSAADGPMPQTREHILLARQVGVPYIVVFLNKADMVDDEELLELVELEIRELLSSYDFPGDDIPIIKGSALKGLNGDKDELGEEAILKLMEAVDNYIPEPERAVDKPFLMPVEDVFSISGRGTVATGRVERGIVKVGEEVEIVGIKATAKTTVTGVEMFRKLLDEGRAGDNIGALLRGVKREDIERGQVLAKPGSITPHTKFKAEAYILTKEEGGRHTPFFNGYRPQFYFRTTDVTGVVDLPAGTEMVMPGDNVAVTINLITPIAMDEGLRFAIREGGRTVGAGVVSSIIE.

Residues 10-206 (KPHVNIGTIG…AVDNYIPEPE (197 aa)) enclose the tr-type G domain. The G1 stretch occupies residues 19–26 (GHVDHGKT). 19-26 (GHVDHGKT) provides a ligand contact to GTP. A Mg(2+)-binding site is contributed by Thr26. A G2 region spans residues 60–64 (GITIA). Residues 81–84 (DCPG) are G3. GTP-binding positions include 81 to 85 (DCPGH) and 136 to 139 (NKAD). Residues 136-139 (NKAD) form a G4 region. The interval 174-176 (SAL) is G5.

The protein belongs to the TRAFAC class translation factor GTPase superfamily. Classic translation factor GTPase family. EF-Tu/EF-1A subfamily. As to quaternary structure, monomer.

The protein resides in the cytoplasm. The enzyme catalyses GTP + H2O = GDP + phosphate + H(+). Its function is as follows. GTP hydrolase that promotes the GTP-dependent binding of aminoacyl-tRNA to the A-site of ribosomes during protein biosynthesis. The sequence is that of Elongation factor Tu from Geobacter sulfurreducens (strain ATCC 51573 / DSM 12127 / PCA).